The primary structure comprises 585 residues: 1-deoxy-D-xylulose-5-phosphate synthase (585 aa).

Thiamine diphosphate-binding positions include His-80 and 121–123 (GHS). Mg(2+) is bound at residue Asp-152. Thiamine diphosphate is bound by residues 153–154 (GS), Asn-181, Tyr-259, and Glu-334. Asn-181 provides a ligand contact to Mg(2+).

This sequence belongs to the transketolase family. DXPS subfamily. In terms of assembly, homodimer. Requires Mg(2+) as cofactor. It depends on thiamine diphosphate as a cofactor.

The catalysed reaction is D-glyceraldehyde 3-phosphate + pyruvate + H(+) = 1-deoxy-D-xylulose 5-phosphate + CO2. It participates in metabolic intermediate biosynthesis; 1-deoxy-D-xylulose 5-phosphate biosynthesis; 1-deoxy-D-xylulose 5-phosphate from D-glyceraldehyde 3-phosphate and pyruvate: step 1/1. Functionally, catalyzes the acyloin condensation reaction between C atoms 2 and 3 of pyruvate and glyceraldehyde 3-phosphate to yield 1-deoxy-D-xylulose-5-phosphate (DXP). This is 1-deoxy-D-xylulose-5-phosphate synthase from Buchnera aphidicola subsp. Schizaphis graminum (strain Sg).